We begin with the raw amino-acid sequence, 279 residues long: Thymidylate synthase (279 aa).

Position 141 to 142 (141 to 142) interacts with dUMP; the sequence is RR. Catalysis depends on C161, which acts as the Nucleophile. DUMP-binding positions include 181–184, N192, and 222–224; these read RSND and HVY. D184 serves as a coordination point for (6R)-5,10-methylene-5,6,7,8-tetrahydrofolate. A278 is a binding site for (6R)-5,10-methylene-5,6,7,8-tetrahydrofolate.

The protein belongs to the thymidylate synthase family. In terms of assembly, homodimer.

It catalyses the reaction dUMP + (6R)-5,10-methylene-5,6,7,8-tetrahydrofolate = 7,8-dihydrofolate + dTMP. It participates in pyrimidine metabolism; dTTP biosynthesis. Provides the sole de novo source of dTMP for DNA biosynthesis. The protein is Thymidylate synthase (thyP3) of Bacillus subtilis (Bacteriophage phi-3T).